The following is a 163-amino-acid chain: Putative protein CASTOR3P (163 aa).

The protein belongs to the GATS family.

The protein is Putative protein CASTOR3P of Homo sapiens (Human).